Here is a 229-residue protein sequence, read N- to C-terminus: MAGLINFEDEQEVKQFLDNLGVEYSYQCYREKDPEGCHRLADYLEGVKKNYESTAQVLQHNCEVNAHAQSCYKLGAYHVTGKGGMKKCLKTAYSCFLKSCNTQGKKSVDACHNVGLLAQDGRALETGPDTTVARQYFEKACEGGFAPSCFNLSTLYIQGFPGLDKSMPLALKYALKACDLGHVWGCANASRMYKLGDGTDKDEQRAEELKNRAKDLHGQEKERQLKFGE.

5 Sel1-like repeats span residues 34 to 66 (PEGC…EVNA), 68 to 104 (AQSC…NTQG), 108 to 145 (VDAC…EGGF), 146 to 182 (APSC…DLGH), and 183 to 218 (VWGC…DLHG). Positions 197 to 229 (DGTDKDEQRAEELKNRAKDLHGQEKERQLKFGE) are disordered.

The protein belongs to the hcp beta-lactamase family.

It localises to the mitochondrion intermembrane space. In terms of biological role, may be required for assembly of mitochondrial respiratory chain complexes. The protein is Cytochrome c oxidase assembly factor 7 (coa7) of Danio rerio (Zebrafish).